Consider the following 88-residue polypeptide: N-alpha-acetyltransferase 38, NatC auxiliary subunit (88 aa).

One can recognise a Sm domain in the interval 1-72 (MDILKLSDFI…VKTIMIDKPV (72 aa)).

In terms of assembly, component of the N-terminal acetyltransferase C (NatC) complex, composed of the catalytic subunit Naa30/MAK3, a large auxiliary subunit Naa35/MAK10 and a small auxiliary subunit Naa38/MAK31.

In terms of biological role, component of the NatC N-terminal acetyltransferase, which associates with the ribosome to acetylate nascent protein chains in a cotranslational manner. NatC acetylates protein N-termini starting with methionine, followed by a hydrophobic or amphipathic amino acid, with amino acids at positions 3 and 4 also contributing to NatC recognition. The first 4 amino acids of cognate substrates are recognized at the Naa30/MAK3-Naa35/MAK10 interface. NatC-dependent acetylation targets various substrate proteins to specific subcellular sites, including isoform 2 of tRNA-specific methyltransferase Trm1 to the inner nuclear membrane. Catalyzes the acetylation of the N-terminal Met of ARF-like GTPase ARL3, which is required for its Golgi localization via interaction with the Golgi-localized integral membrane protein SYS1, which may serve as a receptor for acetylated ARL3. Catalyzes the acetylation of the N-terminal Met of L-A virus Gag protein. MAK31 is necessary for the structural stability of L-A double-stranded RNA-containing particles. Necessary for growth at 37 degrees Celsius as well as for maintenance of the killer plasmid. This chain is N-alpha-acetyltransferase 38, NatC auxiliary subunit (MAK31), found in Saccharomyces cerevisiae (strain ATCC 204508 / S288c) (Baker's yeast).